Consider the following 497-residue polypeptide: Probable cytosol aminopeptidase (497 aa).

The Mn(2+) site is built by Lys263 and Asp268. The active site involves Lys275. Residues Asp286, Asp345, and Glu347 each coordinate Mn(2+). Residue Arg349 is part of the active site.

Belongs to the peptidase M17 family. Mn(2+) serves as cofactor.

It localises to the cytoplasm. The catalysed reaction is Release of an N-terminal amino acid, Xaa-|-Yaa-, in which Xaa is preferably Leu, but may be other amino acids including Pro although not Arg or Lys, and Yaa may be Pro. Amino acid amides and methyl esters are also readily hydrolyzed, but rates on arylamides are exceedingly low.. The enzyme catalyses Release of an N-terminal amino acid, preferentially leucine, but not glutamic or aspartic acids.. Functionally, presumably involved in the processing and regular turnover of intracellular proteins. Catalyzes the removal of unsubstituted N-terminal amino acids from various peptides. This is Probable cytosol aminopeptidase from Allorhizobium ampelinum (strain ATCC BAA-846 / DSM 112012 / S4) (Agrobacterium vitis (strain S4)).